The following is a 137-amino-acid chain: MIWKRHLTLDELNATSLNTMVAHLAIVYTRLGDDVLEAEMPVDARTHQPFGLLHGGASAALAETLGSMAGYLMTRDGQCVVGTELNATHHRAVSQGKVRGVCQPLHLGRQSQSWEIVIFDEQGRRCCTCRLGTAVMG.

The Nucleophile or proton acceptor role is filled by Glu-63.

It belongs to the thioesterase PaaI family. In terms of assembly, homotetramer. Dimer of dimers. Interacts specifically with the aryl carrier protein (ArCP) domain of EntB.

The protein resides in the cytoplasm. It functions in the pathway siderophore biosynthesis; enterobactin biosynthesis. Functionally, required for optimal enterobactin synthesis. Acts as a proofreading enzyme that prevents EntB misacylation by hydrolyzing the thioester bound existing between EntB and wrongly charged molecules. The chain is Proofreading thioesterase EntH from Citrobacter koseri (strain ATCC BAA-895 / CDC 4225-83 / SGSC4696).